The primary structure comprises 86 residues: Omega-theraphotoxin-Hhn1a 2 (86 aa).

The N-terminal stretch at 1 to 21 is a signal peptide; sequence MKSIVFVALLGLALLAVVCSA. Positions 22–50 are excised as a propeptide; it reads SEDAHKELLKEVVRAMVVDKTDAVQAEER. 3 disulfides stabilise this stretch: Cys52/Cys66, Cys59/Cys71, and Cys65/Cys78.

Belongs to the neurotoxin 10 (Hwtx-1) family. 17 (Hntx-9) subfamily. In terms of tissue distribution, expressed by the venom gland.

It localises to the secreted. Ion channel inhibitor. This is Omega-theraphotoxin-Hhn1a 2 from Cyriopagopus hainanus (Chinese bird spider).